The chain runs to 208 residues: Ribosomal RNA small subunit methyltransferase J (208 aa).

S-adenosyl-L-methionine is bound by residues 54-55 (RD), 70-71 (ER), and D122.

It belongs to the methyltransferase superfamily. RsmJ family.

It is found in the cytoplasm. The enzyme catalyses guanosine(1516) in 16S rRNA + S-adenosyl-L-methionine = N(2)-methylguanosine(1516) in 16S rRNA + S-adenosyl-L-homocysteine + H(+). Specifically methylates the guanosine in position 1516 of 16S rRNA. The polypeptide is Ribosomal RNA small subunit methyltransferase J (Agrobacterium fabrum (strain C58 / ATCC 33970) (Agrobacterium tumefaciens (strain C58))).